Here is an 870-residue protein sequence, read N- to C-terminus: Protein translocase subunit SecA (870 aa).

Residues Gln-86, 104–108, and Asp-499 each bind ATP; that span reads GEGKT. Positions 854, 856, 865, and 866 each coordinate Zn(2+).

The protein belongs to the SecA family. As to quaternary structure, monomer and homodimer. Part of the essential Sec protein translocation apparatus which comprises SecA, SecYEG and auxiliary proteins SecDF-YajC and YidC. Zn(2+) serves as cofactor.

Its subcellular location is the cell inner membrane. It is found in the cytoplasm. The enzyme catalyses ATP + H2O + cellular proteinSide 1 = ADP + phosphate + cellular proteinSide 2.. Functionally, part of the Sec protein translocase complex. Interacts with the SecYEG preprotein conducting channel. Has a central role in coupling the hydrolysis of ATP to the transfer of proteins into and across the cell membrane, serving both as a receptor for the preprotein-SecB complex and as an ATP-driven molecular motor driving the stepwise translocation of polypeptide chains across the membrane. This chain is Protein translocase subunit SecA, found in Ehrlichia ruminantium (strain Welgevonden).